A 581-amino-acid chain; its full sequence is Multidrug resistance-like ATP-binding protein MdlA (581 aa).

One can recognise an ABC transmembrane type-1 domain in the interval 18–303; it reads YLGSIILLII…LAWMFNIVER (286 aa). 6 helical membrane passes run 23–43, 53–73, 127–149, 153–175, 247–267, and 280–300; these read ILLI…GILI, GFEI…VYIL, VVFA…ISVL, ITQI…AILI, VIYL…GWLV, and FIMY…MFNI. An ABC transporter domain is found at 337–571; it reads INIDMFFYPK…KNWYKSMYDH (235 aa). 369–376 serves as a coordination point for ATP; it reads GPTGAGKS.

This sequence belongs to the ABC transporter superfamily. Drug exporter-2 (TC 3.A.1.117) family.

It localises to the cell membrane. The enzyme catalyses ATP + H2O + xenobioticSide 1 = ADP + phosphate + xenobioticSide 2.. This Buchnera aphidicola subsp. Schizaphis graminum (strain Sg) protein is Multidrug resistance-like ATP-binding protein MdlA (mdlA).